We begin with the raw amino-acid sequence, 402 residues long: Oligopeptide transport ATP-binding protein OppD (402 aa).

The region spanning 22-309 is the ABC transporter domain; that stretch reads LDITDLHVNF…PLHPYTWALI (288 aa). Position 58 to 65 (58 to 65) interacts with ATP; the sequence is GESGSGKS.

The protein belongs to the ABC transporter superfamily. The complex is composed of two ATP-binding proteins (OppD and OppF), two transmembrane proteins (OppB and OppC) and a solute-binding protein (OppA).

It is found in the cell membrane. It catalyses the reaction a [peptide](out) + ATP + H2O = a [peptide](in) + ADP + phosphate + H(+). Part of the ABC transporter complex OppABCDF involved in the uptake of oligopeptides. Probably responsible for energy coupling to the transport system. The sequence is that of Oligopeptide transport ATP-binding protein OppD (oppD) from Mycoplasma genitalium (strain ATCC 33530 / DSM 19775 / NCTC 10195 / G37) (Mycoplasmoides genitalium).